The chain runs to 645 residues: Cyclin-D-binding Myb-like transcription factor 1 (645 aa).

Disordered stretches follow at residues 34 to 71 and 95 to 119; these read QNDG…STEY and RDEE…KKGE. Composition is skewed to acidic residues over residues 36-46 and 95-105; these read DGEDLGSDETT and RDEELESDDLS. The 39-residue stretch at 219 to 257 folds into the Myb-like 1 domain; it reads GKYTDEEINKLKELRQKHGNDWATIGSALGRSASSVKDR. One can recognise an HTH myb-type domain in the interval 262-327; the sequence is KDTCNTGKWT…KWLNYLNWKQ (66 aa). The H-T-H motif DNA-binding region spans 300-323; sequence WASVAELVGTRSEKQCRSKWLNYL. The Myb-like 2 domain maps to 333–382; it reads WTKEDDINLVRRIAELEVEDENEINWDILASGWSSVRSPQWLRSKWWTIK. Residues 568-645 form a disordered region; the sequence is VKEEPSENQT…ILENQEEGSN (78 aa). Residues 587-597 are compositionally biased toward basic and acidic residues; that stretch reads EQSKQGEKTLD. Over residues 615 to 625 the composition is skewed to polar residues; it reads IPTNEDISSDS.

Belongs to the DMTF1 family.

It is found in the nucleus. Its function is as follows. Transcriptional activator which activates the CDKN2A/ARF locus in response to Ras-Raf signaling, thereby promoting p53/TP53-dependent growth arrest. Binds to the consensus sequence 5'-CCCG[GT]ATGT-3'. The sequence is that of Cyclin-D-binding Myb-like transcription factor 1 (dmtf1) from Danio rerio (Zebrafish).